The chain runs to 108 residues: Con-Ins K1 (108 aa).

The signal sequence occupies residues 1-24; it reads MTTSSYFLLVALGLLLYVCQSSFG. The propeptide occupies 25–28; it reads SPHT. Intrachain disulfides connect Cys-41–Cys-90, Cys-53–Cys-103, and Cys-89–Cys-94. 4-carboxyglutamate is present on Glu-44. Positions 57–83 are cleaved as a propeptide — c peptide; the sequence is RKRRGFPSMLKARAKRNEAFLLQRDGR. Glu-87 carries the post-translational modification 4-carboxyglutamate. Gln-107 carries the glutamine amide modification.

Belongs to the insulin family. As to quaternary structure, heterodimer of A and B chains; disulfide-linked. Expressed by the venom gland.

It is found in the secreted. Functionally, this venom insulin, from a fish-hunting cone snail, facilitates prey capture by rapidly inducing hypoglycemic shock. It is one of the smallest known insulin found in nature and lacks the C-terminal segment of the B chain that, in human insulin, mediates engagement of the insulin receptor (INSR) and assembly of the hormone's hexameric storage form. Despite lacking this segment, it both binds and activates human insulin receptor (long isoform (HIR-B)) with a moderate potency (EC(50)=30.45 nM). In vivo, intraperitoneal injection of this peptide into zebrafish lowers blood glucose with a lower potency than human insulin. In addition, when applied to water, this peptide reduces overall locomotor activity of zebrafish larvae, observed as a significant decrease in the percentage of time spent swimming and movement frequency. When tested on a mouse model of diabetes, this insulin also lowers blood glucose with a 20-fold lower potency than human insulin. The chain is Con-Ins K1 from Conus kinoshitai (Kinoshita's cone).